Consider the following 404-residue polypeptide: 1-deoxy-D-xylulose 5-phosphate reductoisomerase (404 aa).

NADPH-binding residues include Thr-10, Gly-11, Ser-12, Ile-13, Gly-36, Arg-37, Asn-38, and Asn-124. 1-deoxy-D-xylulose 5-phosphate is bound at residue Lys-125. NADPH is bound at residue Glu-126. Asp-150 is a binding site for Mn(2+). Residues Ser-151, Glu-152, Ser-186, and His-209 each contribute to the 1-deoxy-D-xylulose 5-phosphate site. Glu-152 contributes to the Mn(2+) binding site. Gly-215 contributes to the NADPH binding site. 1-deoxy-D-xylulose 5-phosphate contacts are provided by Ser-222, Asn-227, Lys-228, and Glu-231. Glu-231 contributes to the Mn(2+) binding site.

This sequence belongs to the DXR family. In terms of assembly, homodimer. It depends on Mg(2+) as a cofactor. The cofactor is Mn(2+).

The enzyme catalyses 2-C-methyl-D-erythritol 4-phosphate + NADP(+) = 1-deoxy-D-xylulose 5-phosphate + NADPH + H(+). Its pathway is isoprenoid biosynthesis; isopentenyl diphosphate biosynthesis via DXP pathway; isopentenyl diphosphate from 1-deoxy-D-xylulose 5-phosphate: step 1/6. Functionally, catalyzes the NADPH-dependent rearrangement and reduction of 1-deoxy-D-xylulose-5-phosphate (DXP) to 2-C-methyl-D-erythritol 4-phosphate (MEP). In Erwinia tasmaniensis (strain DSM 17950 / CFBP 7177 / CIP 109463 / NCPPB 4357 / Et1/99), this protein is 1-deoxy-D-xylulose 5-phosphate reductoisomerase.